A 310-amino-acid chain; its full sequence is tRNA-cytidine(32) 2-sulfurtransferase (310 aa).

The PP-loop motif signature appears at S45 to S50. Residues C120, C123, and C211 each coordinate [4Fe-4S] cluster.

The protein belongs to the TtcA family. As to quaternary structure, homodimer. Requires Mg(2+) as cofactor. [4Fe-4S] cluster serves as cofactor.

The protein resides in the cytoplasm. The catalysed reaction is cytidine(32) in tRNA + S-sulfanyl-L-cysteinyl-[cysteine desulfurase] + AH2 + ATP = 2-thiocytidine(32) in tRNA + L-cysteinyl-[cysteine desulfurase] + A + AMP + diphosphate + H(+). It participates in tRNA modification. Its function is as follows. Catalyzes the ATP-dependent 2-thiolation of cytidine in position 32 of tRNA, to form 2-thiocytidine (s(2)C32). The sulfur atoms are provided by the cysteine/cysteine desulfurase (IscS) system. This Shewanella putrefaciens (strain CN-32 / ATCC BAA-453) protein is tRNA-cytidine(32) 2-sulfurtransferase.